We begin with the raw amino-acid sequence, 287 residues long: Ribonuclease HII (287 aa).

An RNase H type-2 domain is found at 61-287; sequence ALQIGVDEAG…FAPVRKALES (227 aa). A divalent metal cation is bound by residues Asp67, Glu68, and Asp186.

This sequence belongs to the RNase HII family. The cofactor is Mn(2+). It depends on Mg(2+) as a cofactor.

It localises to the cytoplasm. It carries out the reaction Endonucleolytic cleavage to 5'-phosphomonoester.. Endonuclease that specifically degrades the RNA of RNA-DNA hybrids. This Psychrobacter arcticus (strain DSM 17307 / VKM B-2377 / 273-4) protein is Ribonuclease HII.